The primary structure comprises 198 residues: Tumor necrosis factor receptor superfamily member 22 (198 aa).

Residues M1 to R20 lie on the Cytoplasmic side of the membrane. Residues L21–L41 traverse the membrane as a helical; Signal-anchor for type II membrane protein segment. Topologically, residues E42–R198 are extracellular. TNFR-Cys repeat units lie at residues K47 to C82, K84 to C124, and Q125 to C165. Intrachain disulfides connect C48–C59, C60–C73, C63–C82, C85–C100, C103–C116, C106–C124, C126–C141, C144–C157, and C147–C165. N-linked (GlcNAc...) asparagine glycosylation occurs at N62. N-linked (GlcNAc...) asparagine glycosylation occurs at N158.

Ubiquitous.

The protein localises to the cell membrane. It localises to the secreted. Receptor for the cytotoxic ligand TNFSF10/TRAIL. Lacks a cytoplasmic death domain and hence is not capable of inducing apoptosis. Protects cells against TRAIL mediated apoptosis possibly through ligand competition. Cannot induce the NF-kappa-B pathway. The polypeptide is Tumor necrosis factor receptor superfamily member 22 (Tnfrsf22) (Mus musculus (Mouse)).